The chain runs to 309 residues: Homoserine O-succinyltransferase (309 aa).

The active-site Acyl-thioester intermediate is the C142. Residues K163 and S192 each coordinate substrate. H235 serves as the catalytic Proton acceptor. E237 is a catalytic residue. Substrate is bound at residue R249.

The protein belongs to the MetA family. As to quaternary structure, homodimer.

It is found in the cytoplasm. It carries out the reaction L-homoserine + succinyl-CoA = O-succinyl-L-homoserine + CoA. It participates in amino-acid biosynthesis; L-methionine biosynthesis via de novo pathway; O-succinyl-L-homoserine from L-homoserine: step 1/1. Its function is as follows. Transfers a succinyl group from succinyl-CoA to L-homoserine, forming succinyl-L-homoserine. The chain is Homoserine O-succinyltransferase from Salmonella arizonae (strain ATCC BAA-731 / CDC346-86 / RSK2980).